The sequence spans 1041 residues: Nuclear migration protein unc-83 (1041 aa).

3 disordered regions span residues 258-283 (VGHLTASDTEESEADEEDRHSQTETV), 453-498 (IHGQ…LEDD), and 613-646 (IRNRDSDTAPEHSDAAQAYEWDEYNPPQKDDSIS). Positions 456–465 (QKKPLRRASR) are enriched in basic residues. Residues 613 to 626 (IRNRDSDTAPEHSD) are compositionally biased toward basic and acidic residues. Coiled coils occupy residues 785–816 (RSKEDVAKTLDAVTAIERRLSSERQELRDLLA) and 931–951 (KAELSIYSNALARLKDRFNDM). The region spanning 986–1041 (TENEPLTIAEAISSSRLIKFTFALSLLAALAAIFYYHVFGKPFGPHVTYVNGPPPV) is the KASH domain. A helical; Anchor for type IV membrane protein transmembrane segment spans residues 1005-1024 (FTFALSLLAALAAIFYYHVF).

As to quaternary structure, component of the unc-83-unc-84 LINC complex which contains at least unc-83 and unc-84. Within the unc-83-unc-84 LINC complex interacts with unc-84 (via C-terminus); the interaction is probably required to recruit unc-83 to the nuclear envelope where it then recruits dynein and kinesin-1 complexes to regulate nuclear migration. Interacts with bicd-1 and dlc-1. Interacts with nud-2 (via C-terminus); the interaction is direct, and is required for recruitment of nud-2 to the nuclear envelope. Interacts with klc-2; the interaction is direct. Predominantly expressed in migratory nuclei. Expressed in a variety of cell-types, including cells around the pharynx and in the uterus.

It localises to the nucleus membrane. The protein resides in the nucleus outer membrane. Its function is as follows. Cargo-specific adapter that is involved in nuclear migration during development and thereafter. Component of the unc-83-unc-84 LINC (LInker of Nucleoskeleton and Cytoskeleton) complex where it interacts with unc-84 to form a bridge connecting the nuclear envelope to the cytoskeleton which allows for nuclear transport along microtubules. Within the complex, connects the nuclear envelope to the microtubule cytoskeleton through the kinesin-1 light chain protein klc-2 (most likely within the Kinesin 1 motor complex) to regulate nuclear migrations. Moreover, within the complex, also recruits the large microtubule-associated bicd-1-dlc-1-egal-1 and lis-1-nud-2 complexes to the nuclear envelope to regulate both the bidirectional migration of nuclei and the extent of nuclear migrations. Not required for centrosome attachment to the nucleus. This is Nuclear migration protein unc-83 from Caenorhabditis elegans.